We begin with the raw amino-acid sequence, 349 residues long: Probable G-protein coupled receptor 21 (349 aa).

Topologically, residues 1 to 32 are extracellular; that stretch reads MNSTWDGNQSSHPFCLLALGYLETVRFCLLEV. Residues Asn2 and Asn8 are each glycosylated (N-linked (GlcNAc...) asparagine). The chain crosses the membrane as a helical span at residues 33-53; that stretch reads LIIVFLTVLIISGNIIVIFVF. Topologically, residues 54–75 are cytoplasmic; it reads HCAPLLNHHSTSYFIQTMAYAD. A helical membrane pass occupies residues 76–96; sequence LLVGVSCLVPSLSLLYYPLPI. Residues 97–104 lie on the Extracellular side of the membrane; it reads EEAMTCQV. The helical transmembrane segment at 105–125 threads the bilayer; sequence FGFVVSVLKSISMASLACISI. At 126 to 147 the chain is on the cytoplasmic side; the sequence is DRYIAITKPLTYNTLVTPWRLR. Residues 148-168 form a helical membrane-spanning segment; the sequence is LCIFLIWLYSTLVFLPSFFHW. Residues 169–191 lie on the Extracellular side of the membrane; that stretch reads GKPGYHGDVFQWCAESWHTNSYF. The chain crosses the membrane as a helical span at residues 192–212; it reads TLFIVMMLYAPAALIVCFTYF. Topologically, residues 213-252 are cytoplasmic; it reads NIFRICQQHTKEISERQARFSSQNGETGEPQTCPDKRYAM. A helical membrane pass occupies residues 253–273; the sequence is VLFRITSVFYVLWLPYIIYFL. The Extracellular segment spans residues 274–283; that stretch reads LESSTGCSSR. A helical transmembrane segment spans residues 284–304; that stretch reads LASFLTTWLAISNSFCNCIIY. Residues 305 to 349 are Cytoplasmic-facing; sequence SLSNSVFQRGLKGLSGSLCTSCASHTTAKDPYTVRCKGPPNGSHI.

Belongs to the G-protein coupled receptor 1 family.

The protein resides in the cell membrane. In terms of biological role, orphan receptor. In Mus musculus (Mouse), this protein is Probable G-protein coupled receptor 21 (Gpr21).